Here is a 158-residue protein sequence, read N- to C-terminus: Pyruvoyl-dependent arginine decarboxylase (158 aa).

Serine 44 is modified (pyruvic acid (Ser)).

It belongs to the PdaD family. Requires pyruvate as cofactor.

The enzyme catalyses L-arginine + H(+) = agmatine + CO2. In Pyrococcus abyssi (strain GE5 / Orsay), this protein is Pyruvoyl-dependent arginine decarboxylase.